The chain runs to 146 residues: Large ribosomal subunit protein uL15 (146 aa).

A compositionally biased stretch (polar residues) spans 1 to 10; the sequence is MRLNQLSPSA. The tract at residues 1-54 is disordered; that stretch reads MRLNQLSPSAGSRPDAKRAGRGAGSGLGKTAGRGHKGQHSRSGGFHKVGFEGGQ. Over residues 21–31 the composition is skewed to gly residues; the sequence is RGAGSGLGKTA.

This sequence belongs to the universal ribosomal protein uL15 family. In terms of assembly, part of the 50S ribosomal subunit.

Its function is as follows. Binds to the 23S rRNA. The chain is Large ribosomal subunit protein uL15 from Halorhodospira halophila (strain DSM 244 / SL1) (Ectothiorhodospira halophila (strain DSM 244 / SL1)).